Here is a 912-residue protein sequence, read N- to C-terminus: Intercellular adhesion molecule 5 (912 aa).

Positions 1–29 (MPGPSPGLRALLGFWVALGLGILRLSAVA) are cleaved as a signal peptide. The Extracellular segment spans residues 30–826 (QEPFWADLQP…RITVRVAGPW (797 aa)). Ig-like C2-type domains lie at 47 to 127 (GGSL…PLPP), 132 to 232 (GENF…RLLA), 239 to 324 (DSQS…LLTL), 332 to 395 (GKLV…NGSA), 403 to 481 (PRLD…VTLT), 486 to 561 (PALD…VAVT), 566 to 645 (PSFE…NPLG), 659 to 734 (PQMD…TVGV), and 738 to 819 (PVVA…RRIT). The N-linked (GlcNAc...) (high mannose) asparagine glycan is linked to Asn-53. Disulfide bonds link Cys-54–Cys-97 and Cys-58–Cys-101. A glycan (N-linked (GlcNAc...) asparagine) is linked at Asn-134. The cysteines at positions 139 and 195 are disulfide-linked. 2 positions are modified to phosphothreonine: Thr-179 and Thr-181. 2 N-linked (GlcNAc...) asparagine glycosylation sites follow: Asn-192 and Asn-211. Cysteines 246 and 297 form a disulfide. N-linked (GlcNAc...) asparagine glycans are attached at residues Asn-311, Asn-366, and Asn-392. Cys-339 and Cys-378 form a disulfide bridge. 3 disulfide bridges follow: Cys-410/Cys-465, Cys-493/Cys-546, and Cys-573/Cys-638. N-linked (GlcNAc...) asparagine glycans are attached at residues Asn-576 and Asn-639. A disulfide bridge links Cys-666 with Cys-717. Positions 678–708 (AAGPACARGRPSPRVRCSREGAPRPARPRVS) are disordered. Asn-756, Asn-787, and Asn-788 each carry an N-linked (GlcNAc...) asparagine glycan. An intrachain disulfide couples Cys-761 to Cys-806. The helical transmembrane segment at 827–847 (LWIAVGGAVGGAVLLAAGAGL) threads the bilayer. The Cytoplasmic segment spans residues 848 to 912 (AFYVQSTACK…EVFAIQLTSA (65 aa)). Residues 880-902 (GGAGSGAEGGPEAEDSAESPAGG) are disordered.

This sequence belongs to the immunoglobulin superfamily. ICAM family. Post-translationally, glycosylation at Asn-53 is critical for functional folding. In terms of tissue distribution, expressed on neurons in the most rostral segment of the mammalian brain, the telencephalon.

It localises to the membrane. Its function is as follows. ICAM proteins are ligands for the leukocyte adhesion protein LFA-1 (integrin alpha-L/beta-2). In Oryctolagus cuniculus (Rabbit), this protein is Intercellular adhesion molecule 5 (ICAM5).